Here is a 217-residue protein sequence, read N- to C-terminus: Large ribosomal subunit protein uL16 (217 aa).

This sequence belongs to the universal ribosomal protein uL16 family. Component of the small ribosomal subunit. Mature ribosomes consist of a small (40S) and a large (60S) subunit. The 40S subunit contains about 33 different proteins and 1 molecule of RNA (18S). The 60S subunit contains about 49 different proteins and 3 molecules of RNA (25S, 5.8S and 5S).

The polypeptide is Large ribosomal subunit protein uL16 (rpl10) (Dictyostelium discoideum (Social amoeba)).